The chain runs to 1383 residues: MSTLIPTASACYSLQLPPTEKDDRLNLNVRTGSASTLYNSLIFVHGGLTIGLELLNYTIPELNEIFYNRINISASKYKTVEKYLSGELFYLSLIERNWSRVVLEELEIRPKPRLLHQICAFNNCLYLFGGLALSQENDEDPTLVPCNDLWEFDLVLKKWTLLDDGSNYELDDAVPSPRFNHKLTVISSLSFANRKDHFGLFIAGGKDKQSNEIYDNSIFDLVEKRYVGSQPFRLVATTGDDTKDKETGLNEFVSNPEHFLNVDQTRNAILSITDDADTPNRKQNKNPSNHHESIVVYGPTRQTGDCQNSLVSFKVGKREIKGGKVLRLHKNSRVAKLKQSIIPYNLRYPTAGLFGQNVVLTGFLPDEYEISIFVYNRPTGKWSRLNIFCSHEYGSHRFWGGFAWQSHHKVILIGNSMTSRTTSSVRFFSIMLTVSLPITNILVSSELSKGRSNNRTSSFVSHGEQRHHRNKSQNDSLLKAELSLESTTEDSTDSSSDKTAESVLDAPVPLANSRRQSFSSLGSDKSPTAVSFSDYVHYAAPKTTYTTIRSVFPPEAITLGRNAFNRIGDLIADIELVSCNGDRIPVSSAVLMERWGQHFISLLAKGYINAVDKFETDQALGLDENQRLRSKSSNSESSSSDIPKLKLSLSESLLSSSSGEHDKKEKMGLSSAHKPQKDVPQFRLPFQDSSESVNREEGSDCSKDRKTGGSSVSTAIDPHHVMPRKNSTSSFQSNSSSLLTSHLQDIPPQLPLPDEQIPAVPAAPVSYRSASRKNSQDHSSPRSSLIHTLTVLRNIPVSKSPRESPFSSPRPSMSGPSGGSADLFSSPFPSLKANYGKPPSNLRKKSYDMNDGTIESSLDSFSSGKSSMAKVSSVPGENPDSDESSIGFQEFNKNPISMFDNALLNFDNIDSENFRMEPSLIPRKLYIPFMTLTVKAFCEYLYTGQIGNKWLLAPTLMDNLLISKFYRVPLLYDLISEILFGVIGKKEAYIIGEARKLKARYFKLLRGANIPIDSNYEFPMDEYDGFLDTVDDGYLDITLLKKASKIHADSVAMSLKKKSVTSNNSRNASIRKEGSTTAESVLEEGEKQEEIVSKDDEDESRTGSTSEEDEVDKEYGLVYLEAKDKSLPTIGPRSKSIFDRQGLAAIEKLEEEQNDHQVHSIVEGEDHENLITLDELVASDAPSDYAIDLIFETATLVTDMKMLLRTSNLKAMTAKFRKCKADIEKEMADIEYQLTQMPSGSRNLAMKSANQLKESQLQSKSSPIIPTVSTVTPSPLPSISGVPSPRLPQQQLPEAQLPKLTKSTSSLSRIASHTSFKALRSMTDVTPMEKSTSDKSFRGKLQQTMLSRTPTNRNEDQDSSSASSIKSSSKKRGIFGLLTGLKR.

Kelch repeat units lie at residues 124–179 (CLYL…SPRF), 199–246 (GLFI…KDKE), and 356–402 (QNVV…WGGF). Residues 450–460 (GRSNNRTSSFV) are compositionally biased toward polar residues. Disordered stretches follow at residues 450–506 (GRSN…VLDA), 625–644 (NQRL…DIPK), 653–825 (LLSS…DLFS), 858–884 (LDSF…SDES), 1063–1114 (NNSR…VDKE), 1251–1289 (QLKE…RLPQ), and 1321–1369 (SMTD…KSSS). A compositionally biased stretch (low complexity) spans 631–644 (KSSNSESSSSDIPK). A compositionally biased stretch (basic and acidic residues) spans 693-707 (VNREEGSDCSKDRKT). Low complexity-rich tracts occupy residues 726-758 (NSTS…EQIP), 803-815 (ESPF…SMSG), and 858-874 (LDSF…VSSV). Over residues 1084-1094 (EGEKQEEIVSK) the composition is skewed to basic and acidic residues. Residues 1251–1280 (QLKESQLQSKSSPIIPTVSTVTPSPLPSIS) are compositionally biased toward low complexity. Residues 1341 to 1352 (LQQTMLSRTPTN) show a composition bias toward polar residues.

Interacts with SIT4.

It is found in the cytoplasm. Its function is as follows. Negatively regulates early sporulation-specific genes. TOR signaling pathway component that contributes to morphogenesis as a regulator of this key morphogenetic pathway. Required for growth and hyphal formation at pH 9, for full virulence in a mouse model of systemic infection and for biofilm formation. Involved in chlamydospore formation, distinctive morphological feature of the fungal pathogen C.albicans that can be induced to form in oxygen-limited environments and has been reported in clinical specimens. The polypeptide is Negative regulator of sporulation MDS3 (MDS3) (Candida albicans (strain SC5314 / ATCC MYA-2876) (Yeast)).